The primary structure comprises 188 residues: dCTP deaminase (188 aa).

Lysine 107–arginine 112 lines the dCTP pocket. The Proton donor/acceptor role is filled by glutamate 133. DCTP is bound by residues glutamine 152, tyrosine 166, and glutamine 176.

Belongs to the dCTP deaminase family. Homotrimer.

It catalyses the reaction dCTP + H2O + H(+) = dUTP + NH4(+). It participates in pyrimidine metabolism; dUMP biosynthesis; dUMP from dCTP (dUTP route): step 1/2. In terms of biological role, catalyzes the deamination of dCTP to dUTP. The chain is dCTP deaminase from Sulfurovum sp. (strain NBC37-1).